A 445-amino-acid polypeptide reads, in one-letter code: Interferon-activable protein 202 (445 aa).

Polar residues predominate over residues 1 to 27 (MSNRNLRSSTNSEFSEGQHQTPSSDSS). The disordered stretch occupies residues 1 to 57 (MSNRNLRSSTNSEFSEGQHQTPSSDSSGHGEDQPQASPGPNKKSHTPKKNISKGAVL). Residues 42–51 (KKSHTPKKNI) show a composition bias toward basic residues. HIN-200 domains are found at residues 46 to 243 (TPKK…IKGE) and 244 to 441 (KLLK…MEVI). 2 required for homomultimerization regions span residues 82 to 89 (MFHATVAT) and 281 to 288 (MFHATVAT).

The protein belongs to the HIN-200 family. Homomultimer; homotetramerizes (via HIN-200 domain 2), enhancing affinity for double-stranded DNA (dsDNA). Interacts (via HIN-200 domain 2) with AIM2 (via HIN-200 domain); preventing activation of the AIM2 inflammasome. Binds to several transcription factors, including NF-kappa-B p50 (NFKB1) and p65 (RELA), FOS, JUN, E2F1, E2F4, MYOD1 and myogenin. Also binds TP53/p53, the hypophosphorylated, growth-inhibitory form of the retinoblastoma protein and the p53-binding protein 1 (TP53BP1). Post-translationally, phosphorylated.

Its subcellular location is the cytoplasm. The protein resides in the nucleus. Functionally, DNA-binding protein involved in innate immune response and has anti-inflammatory activity. Inhibits caspase activation in response to cytosolic DNA by preventing activation of the AIM2 inflammasome, probably by sequestering cytoplasmic DNA and preventing its being bound by AIM2. Also inhibits activation of the AIM2 inflammasome via a direct interaction with AIM2, which prevents the interaction between AIM2 and PYCARD and formation of the AIM2 inflammasome. Binds double-stranded DNA (dsDNA) in the cytosol. Has anti-apoptotic effects due to inhibition of the transcriptional activity of TP53/p53. Inhibits the transcriptional activity of several transcription factors, including NF-kappa-B p50 and p65, FOS, JUN, E2F1, E2F4, MYOD1 and myogenin. This is Interferon-activable protein 202 from Mus musculus (Mouse).